The primary structure comprises 1408 residues: DNA-directed RNA polymerase subunit beta' (1408 aa).

4 residues coordinate Zn(2+): Cys-70, Cys-72, Cys-85, and Cys-88. Residues Asp-460, Asp-462, and Asp-464 each coordinate Mg(2+). 4 residues coordinate Zn(2+): Cys-822, Cys-896, Cys-903, and Cys-906. Positions 1386–1408 (DTGEAPPLSEEETGEIRNSGYAV) are disordered.

The protein belongs to the RNA polymerase beta' chain family. As to quaternary structure, the RNAP catalytic core consists of 2 alpha, 1 beta, 1 beta' and 1 omega subunit. When a sigma factor is associated with the core the holoenzyme is formed, which can initiate transcription. It depends on Mg(2+) as a cofactor. The cofactor is Zn(2+).

The enzyme catalyses RNA(n) + a ribonucleoside 5'-triphosphate = RNA(n+1) + diphosphate. DNA-dependent RNA polymerase catalyzes the transcription of DNA into RNA using the four ribonucleoside triphosphates as substrates. This Nitrosospira multiformis (strain ATCC 25196 / NCIMB 11849 / C 71) protein is DNA-directed RNA polymerase subunit beta'.